Reading from the N-terminus, the 407-residue chain is MITWVGIDDTDTYDKGCTTYVMYNMLKEFLKTKGEWRIITYPRLIRLNPNVPFKTRGNAAVSVGLNVDDPREALELAEWAVDAYSHKIGKTSPGIVVSISNNEHWIYWKALSDVIPLNAAVKWMSKLGVIYRGGRGVIGALASVMADLSQDSTLELLAYSESTPKPSIPIDLVKKLNDSTTPLTFENVSGDYVLIQPHGNDPVIFGIRGDSPYHIIHFASMLINEVDVEPRWLIYLTNQATGHHLNSIMNKPYTTGYVEGSVNEVRLVQGGNIEIRVNSTHVFSYRHYGFKSIDKATYLIAYGGFKPGVNSLDLYMEGGVALMLNNIVKNPRCPRCGSNLESTGRVGLLKCPKCGLITGLPRLMNYTSEFTLEEPREAEVRHLHKPTARIGLEGLVNVFNRPSLWII.

This sequence belongs to the TiaS family.

It is found in the cytoplasm. It carries out the reaction cytidine(34) in tRNA(Ile2) + agmatine + ATP + H2O = 2-agmatinylcytidine(34) in tRNA(Ile2) + AMP + 2 phosphate + 2 H(+). In terms of biological role, ATP-dependent agmatine transferase that catalyzes the formation of 2-agmatinylcytidine (agm2C) at the wobble position (C34) of tRNA(Ile2), converting the codon specificity from AUG to AUA. This chain is tRNA(Ile2) 2-agmatinylcytidine synthetase TiaS, found in Caldivirga maquilingensis (strain ATCC 700844 / DSM 13496 / JCM 10307 / IC-167).